The following is a 289-amino-acid chain: 2,3-dimethylmalate lyase (289 aa).

The protein belongs to the isocitrate lyase/PEP mutase superfamily. Homotetramer. Requires Mg(2+) as cofactor.

The enzyme catalyses (2R,3S)-2,3-dimethylmalate = propanoate + pyruvate. It participates in cofactor degradation; nicotinate degradation; propanoate and pyruvate from 6-hydroxynicotinate: step 8/8. Its activity is regulated as follows. Completely inhibited by propionic anhydride and by cystamine. Irreversibly inhibited by the mercapto reagents iodoacetate and iodoacetamide. Unaffected by hydroxylamine. Its function is as follows. Catalyzes the formation of proponate and pyruvate from (2R,3S)-2,3-dimethylmalate. Has no activity toward dimethylmaleate, malate, citramalate, isocitrate and citrate. In Eubacterium barkeri (Clostridium barkeri), this protein is 2,3-dimethylmalate lyase.